The sequence spans 242 residues: UPF0246 protein SPCG_1533 (242 aa).

It belongs to the UPF0246 family.

The chain is UPF0246 protein SPCG_1533 from Streptococcus pneumoniae (strain CGSP14).